Reading from the N-terminus, the 85-residue chain is Large ribosomal subunit protein bL27 (85 aa).

A disordered region spans residues 1–20 (MAHKKAGGSTRNGRDSEAKR).

The protein belongs to the bacterial ribosomal protein bL27 family.

The polypeptide is Large ribosomal subunit protein bL27 (Enterobacter sp. (strain 638)).